Reading from the N-terminus, the 275-residue chain is TATA-box-binding protein (275 aa).

Disordered regions lie at residues 23-45 and 73-92; these read EDES…FGMN and GSMS…HTPA. Repeat copies occupy residues 103-179 and 193-270.

The protein belongs to the TBP family. Belongs to the TFIID complex together with the TBP-associated factors (TAFs). Binds DNA as monomer.

Its subcellular location is the nucleus. Functionally, general transcription factor that functions at the core of the DNA-binding multiprotein factor TFIID. Binding of TFIID to the TATA box is the initial transcriptional step of the pre-initiation complex (PIC), playing a role in the activation of eukaryotic genes transcribed by RNA polymerase II. The sequence is that of TATA-box-binding protein from Artemia franciscana (Brine shrimp).